A 429-amino-acid chain; its full sequence is Adenylosuccinate synthetase (429 aa).

Residues Gly-12 to Lys-18 and Gly-40 to Thr-42 each bind GTP. Asp-13 acts as the Proton acceptor in catalysis. 2 residues coordinate Mg(2+): Asp-13 and Gly-40. IMP is bound by residues Asp-13 to Lys-16, Asn-38 to His-41, Thr-127, Arg-141, Gln-222, Thr-237, and Arg-301. The active-site Proton donor is the His-41. Position 297 to 303 (Ala-297 to Arg-303) interacts with substrate. GTP is bound by residues Arg-303, Lys-329–Asp-331, and Ser-411–Gly-413.

It belongs to the adenylosuccinate synthetase family. In terms of assembly, homodimer. Mg(2+) is required as a cofactor.

Its subcellular location is the cytoplasm. It carries out the reaction IMP + L-aspartate + GTP = N(6)-(1,2-dicarboxyethyl)-AMP + GDP + phosphate + 2 H(+). The protein operates within purine metabolism; AMP biosynthesis via de novo pathway; AMP from IMP: step 1/2. In terms of biological role, plays an important role in the de novo pathway of purine nucleotide biosynthesis. Catalyzes the first committed step in the biosynthesis of AMP from IMP. This chain is Adenylosuccinate synthetase, found in Endomicrobium trichonymphae.